We begin with the raw amino-acid sequence, 249 residues long: APKELQVSYAHKSSELVIGGDECDINEHPFLAFLYSRGNFCGLTLINQEWVLTAAHCDRRFMPIYLGIHTLSVPNDDEVIRYPKDNFICPNNNIIDEKDKDIMLIRLNRPVKNSEHIAPISLPSNLPSVGSVCRVMGWGSITAPNDTFPDVPHCANINLFNDTVCHGAYKRFPVKSRTLCAGVLQGGKDKCMGDSGGPLICNGPFHGILFWGDDPCALPRKPALYTKGFEYPPWIQSIIAKNTTETCPP.

The first 10 residues, 1–10, serve as a signal peptide directing secretion; it reads APKELQVSYA. A propeptide spanning residues 11–16 is cleaved from the precursor; the sequence is HKSSEL. The region spanning 17–240 is the Peptidase S1 domain; the sequence is VIGGDECDIN…YPPWIQSIIA (224 aa). 6 disulfide bridges follow: C23–C154, C41–C57, C89–C247, C133–C201, C165–C180, and C191–C216. Active-site charge relay system residues include H56 and D101. N-linked (GlcNAc...) asparagine glycosylation is found at N145 and N161. S195 (charge relay system) is an active-site residue. An N-linked (GlcNAc...) asparagine glycan is attached at N242.

This sequence belongs to the peptidase S1 family. Snake venom subfamily. In terms of assembly, monomer. Post-translationally, glycoprotein, contains approx. 52% carbohydrate which could be removed by N-glycosidase. Glycosylation is important, since deglycosylated barnettobin loses its clotting and defibrinogenating effects. As to expression, expressed by the venom gland.

Its subcellular location is the secreted. Its activity is regulated as follows. Both coagulant and amidolytic activities are inhibited by PMSF. Amidolytic activity is partially inhibited by DTT, chymostatin, SBTI and TLCK, but not by heparin and EDTA. In terms of biological role, thrombin-like snake venom serine protease that releases only fibrinopeptide A from human Aalpha chain of fibrinogen (specific coagulant activity was 251.7 NIH thrombin units/mg). Also shows fibrino(geno)lytic activities in vitro and defibrinogenating effects in vivo. The chain is Thrombin-like enzyme barnettobin from Bothrops barnetti (Barnett's lancehead).